We begin with the raw amino-acid sequence, 134 residues long: Small ribosomal subunit protein uS8c (134 aa).

The protein belongs to the universal ribosomal protein uS8 family. Part of the 30S ribosomal subunit.

The protein resides in the plastid. It is found in the chloroplast. Functionally, one of the primary rRNA binding proteins, it binds directly to 16S rRNA central domain where it helps coordinate assembly of the platform of the 30S subunit. The polypeptide is Small ribosomal subunit protein uS8c (rps8) (Lactuca sativa (Garden lettuce)).